Reading from the N-terminus, the 308-residue chain is Acetylglutamate kinase (308 aa).

Substrate-binding positions include 86–87 (GG), Arg108, and Asn201.

It belongs to the acetylglutamate kinase family. ArgB subfamily.

The protein resides in the cytoplasm. It carries out the reaction N-acetyl-L-glutamate + ATP = N-acetyl-L-glutamyl 5-phosphate + ADP. It functions in the pathway amino-acid biosynthesis; L-arginine biosynthesis; N(2)-acetyl-L-ornithine from L-glutamate: step 2/4. Functionally, catalyzes the ATP-dependent phosphorylation of N-acetyl-L-glutamate. The protein is Acetylglutamate kinase of Prochlorococcus marinus (strain MIT 9303).